The sequence spans 317 residues: uncharacterized protein (317 aa).

This is an uncharacterized protein from Borreliella burgdorferi (strain ATCC 35210 / DSM 4680 / CIP 102532 / B31) (Borrelia burgdorferi).